We begin with the raw amino-acid sequence, 286 residues long: ATP synthase gamma chain (286 aa).

Belongs to the ATPase gamma chain family. In terms of assembly, F-type ATPases have 2 components, CF(1) - the catalytic core - and CF(0) - the membrane proton channel. CF(1) has five subunits: alpha(3), beta(3), gamma(1), delta(1), epsilon(1). CF(0) has three main subunits: a, b and c.

The protein localises to the cell inner membrane. Its function is as follows. Produces ATP from ADP in the presence of a proton gradient across the membrane. The gamma chain is believed to be important in regulating ATPase activity and the flow of protons through the CF(0) complex. This chain is ATP synthase gamma chain, found in Alteromonas mediterranea (strain DSM 17117 / CIP 110805 / LMG 28347 / Deep ecotype).